We begin with the raw amino-acid sequence, 308 residues long: Methionyl-tRNA formyltransferase (308 aa).

109 to 112 is a binding site for (6S)-5,6,7,8-tetrahydrofolate; sequence SLLP.

This sequence belongs to the Fmt family.

It carries out the reaction L-methionyl-tRNA(fMet) + (6R)-10-formyltetrahydrofolate = N-formyl-L-methionyl-tRNA(fMet) + (6S)-5,6,7,8-tetrahydrofolate + H(+). Its function is as follows. Attaches a formyl group to the free amino group of methionyl-tRNA(fMet). The formyl group appears to play a dual role in the initiator identity of N-formylmethionyl-tRNA by promoting its recognition by IF2 and preventing the misappropriation of this tRNA by the elongation apparatus. The polypeptide is Methionyl-tRNA formyltransferase (Phenylobacterium zucineum (strain HLK1)).